Consider the following 24-residue polypeptide: Brevinin-1PTa (24 aa).

C18 and C24 are disulfide-bonded.

In terms of tissue distribution, expressed by the skin glands.

The protein localises to the secreted. Its function is as follows. Has antibacterial activity against the Gram-positive bacterium S.aureus ATCC 25923 (MIC=3 uM) and the Gram-negative bacterium E.coli ATCC 25726 (MIC=24 uM). This is Brevinin-1PTa from Pulchrana picturata (Malaysian fire frog).